A 329-amino-acid chain; its full sequence is Tryptophan--tRNA ligase (329 aa).

Residues 9–11 (QPS) and 17–18 (GN) contribute to the ATP site. A 'HIGH' region motif is present at residues 10–18 (PSGIPTIGN). D133 serves as a coordination point for L-tryptophan. ATP contacts are provided by residues 145 to 147 (GDD), V184, and 193 to 197 (KMSKS). A 'KMSKS' region motif is present at residues 193-197 (KMSKS).

The protein belongs to the class-I aminoacyl-tRNA synthetase family. In terms of assembly, homodimer.

The protein localises to the cytoplasm. The enzyme catalyses tRNA(Trp) + L-tryptophan + ATP = L-tryptophyl-tRNA(Trp) + AMP + diphosphate + H(+). In terms of biological role, catalyzes the attachment of tryptophan to tRNA(Trp). The polypeptide is Tryptophan--tRNA ligase (Staphylococcus epidermidis (strain ATCC 35984 / DSM 28319 / BCRC 17069 / CCUG 31568 / BM 3577 / RP62A)).